The following is an 84-amino-acid chain: CDC42 small effector protein 2-A (84 aa).

2 S-palmitoyl cysteine lipidation sites follow: C10 and C11. Positions 29-42 (IGEPTNFVHTAHVG) constitute a CRIB domain.

Belongs to the CDC42SE/SPEC family.

Its subcellular location is the cytoplasm. The protein resides in the cytoskeleton. It is found in the cell membrane. In terms of biological role, probably involved in the organization of the actin cytoskeleton by acting downstream of CDC42, inducing actin filament assembly. This is CDC42 small effector protein 2-A (cdc42se2-a) from Xenopus laevis (African clawed frog).